Reading from the N-terminus, the 148-residue chain is Receptor activity-modifying protein 1 (148 aa).

The signal sequence occupies residues 1–26; the sequence is MAPGLRGLPRCGLWLLLAHHLFMVTA. Cystine bridges form between Cys-27-Cys-82, Cys-40-Cys-72, and Cys-57-Cys-104. The Extracellular portion of the chain corresponds to 27-118; sequence CRDPDYGTLI…RALRDPPNSI (92 aa). A helical membrane pass occupies residues 119–140; the sequence is LCPFIALPITVTLLMTALVVWR. Residues 141 to 148 lie on the Cytoplasmic side of the membrane; sequence SKRTEGIV.

Belongs to the RAMP family. Heterodimer of CALCRL and RAMP1; the interaction induces allosteric modulation of CALCRL function and CGRP1/CALCA and CGRP2/CALCB ligand specificity. Heterodimer of CALCR and RAMP1; interaction forms the AMYR1 receptor complex for amylin/IAPP and CGRP1/CALCA ligands. In terms of tissue distribution, expressed predominantly in the thymus, skeletal muscle, embryonic and adult brain, embryonic and adult lung, and colon.

It is found in the cell membrane. Its function is as follows. Accessory protein that interacts with and modulates the function of G-protein coupled receptors including calcitonin gene-related peptide type 1 receptor (CALCRL) and calcitonin receptor (CALCR). Required for the transport of CALCRL to the plasma membrane. Together with CALCRL, form the receptor complex for the calcitonin gene-related peptides CGRP1/CALCA and CGRP2/CALCB. Together with CALCR, form the AMYR1 receptor complex for amylin/IAPP and CGRP1/CALCA. This Mus musculus (Mouse) protein is Receptor activity-modifying protein 1.